The chain runs to 223 residues: Ribonuclease T (223 aa).

The Exonuclease domain maps to 20 to 194; that stretch reads VVIDVETAGF…YDTERTAELF (175 aa). Mg(2+) contacts are provided by Asp23, Glu25, His181, and Asp186. Residue His181 is the Proton donor/acceptor of the active site.

This sequence belongs to the RNase T family. Homodimer. Mg(2+) is required as a cofactor.

Trims short 3' overhangs of a variety of RNA species, leaving a one or two nucleotide 3' overhang. Responsible for the end-turnover of tRNA: specifically removes the terminal AMP residue from uncharged tRNA (tRNA-C-C-A). Also appears to be involved in tRNA biosynthesis. This is Ribonuclease T from Shewanella baltica (strain OS185).